Here is a 234-residue protein sequence, read N- to C-terminus: Small ribosomal subunit protein uS2 (234 aa).

Belongs to the universal ribosomal protein uS2 family.

This chain is Small ribosomal subunit protein uS2, found in Prochlorococcus marinus subsp. pastoris (strain CCMP1986 / NIES-2087 / MED4).